Reading from the N-terminus, the 346-residue chain is B3 domain-containing protein At5g60142 (346 aa).

A DNA-binding region (TF-B3) is located at residues 13–109 (PKFFKVYLPD…CFNFCIYGRA (97 aa)). 2 disordered regions span residues 158–179 (QDYNEEDTSSEDITALDDADND) and 192–243 (TSSE…HDRQ). A compositionally biased stretch (acidic residues) spans 192–217 (TSSEDIIVIDDDDDDDDQDYGDDDHA). Basic and acidic residues predominate over residues 218 to 229 (DVEKERWRGVKT).

It is found in the nucleus. The sequence is that of B3 domain-containing protein At5g60142 from Arabidopsis thaliana (Mouse-ear cress).